Consider the following 603-residue polypeptide: Probable L-gulonolactone oxidase 6 (603 aa).

An N-terminal signal peptide occupies residues methionine 1–serine 35. An FAD-binding PCMH-type domain is found at serine 64–methionine 246.

The protein belongs to the oxygen-dependent FAD-linked oxidoreductase family. FAD is required as a cofactor.

It catalyses the reaction L-gulono-1,4-lactone + O2 = L-ascorbate + H2O2 + H(+). The protein operates within cofactor biosynthesis; L-ascorbate biosynthesis. Functionally, may be involved in the biosynthesis of ascorbic acid. The chain is Probable L-gulonolactone oxidase 6 from Arabidopsis thaliana (Mouse-ear cress).